The following is a 422-amino-acid chain: Phospholipase D Z (422 aa).

The signal sequence occupies residues 1-18 (MMMKLLFLIALFGCVVNS). N-linked (GlcNAc...) asparagine glycosylation is present at Asn53. A PLD phosphodiesterase 1 domain is found at 148–175 (GAGILHTKVIVVDQVSAYLGSANLDWRS). Active-site residues include His153, Lys155, and Asp160. Residues Asn225 and Asn320 are each glycosylated (N-linked (GlcNAc...) asparagine). A PLD phosphodiesterase 2 domain is found at 357 to 383 (FTRVNHAKYMVTDEQSYVGTSNWSEDY). Residues His362, Lys364, and Asp369 contribute to the active site. A glycan (N-linked (GlcNAc...) asparagine) is linked at Asn378.

Belongs to the phospholipase D family.

It carries out the reaction a 1,2-diacyl-sn-glycero-3-phosphocholine + H2O = a 1,2-diacyl-sn-glycero-3-phosphate + choline + H(+). Its activity is regulated as follows. Inhibited by butan-1-ol. Functionally, hydrolyzes membrane phospholipids, such as PtdCho (phosphatidylcholine), producing the free headgroup and PtdOH (phosphatidic acid; signaling molecule on its own). The chain is Phospholipase D Z (pldZ) from Dictyostelium discoideum (Social amoeba).